Reading from the N-terminus, the 678-residue chain is MLKTDFNQPKGSTIGVLRDGRTIQQTFDKMRYADTIQELRTMEPVGPRDVATVRRATEDSVLVNAPVYYDKNDTTSPDDGISVFVTAGGARWKFNTFKGYCAGLAGLKEDGSNVTTVVNGIVNRIVAKMVAAGRVNNQQRTVNIPVTGDAPEWKLTGPLVWPTVISLVFHGSVLLDGTSLTAGKILNCNNVPFMDRLTVAIMAAGTNPTDRPGRVNQAVGRAALTCIGGEVTVRLPGTQMDGSNNPTIHTVGAMIGNDAACLLDARDIYFEKFNIIGAKTGIEFGCYNTFMCGVEHFNVSRCYDGFSSPTLGSNYGERMYLRNGTIGNMDRHGAYLVGGGDFTLENVSVDFLGGDLAHFGPLSPAEYKHLSGHIEGVKGSLAAKEMPASYSKALVILGKAVRRDDRVVDQNDYRGVRQLFACPQNPYGRMLKVINESYAPGREGQVPNNPYPCETGWPGNSGVELILPKDTFVDTPYVNSYSPAVRNSVNQTISFTTASTGPLGGNVLSTDYAFAAEIIGGATCSYGTPAEATSDGYMPFIITLSDPSDVVYLFCTNRFRPGSGQSVLWGNCSVTLVGTTGSIILAPVIASYLGTTWTANTTTGAVTATPIRRGIQEGGTVDMSALAAAGGIPNGTYQAMPSRSVQGFYLGCDHAVAGFKITGGTGQVRLKLPVWWFR.

The protein in the N-terminal section; belongs to the Przondovirus depolymerase 2 family. As to quaternary structure, homotrimer. Interacts (via N-terminus) with depolymerase 1 (via N-terminus); this interaction probably gives rise to a branched tailspike.

It localises to the virion. Functions as a receptor binding protein (RBP) and probably mediates the attachment to the host capsular exopolysaccharides. Displays a depolymerase activity that specifically degrades the K56-type polysaccharides of Klebsiella pneumoniae capsule, which allows the phage to reach the host cell membrane and bind the entry receptor. This is Depolymerase 2, capsule K56-specific from Klebsiella pneumoniae (Bacteriophage KN3-1).